Reading from the N-terminus, the 316-residue chain is Ribosomal RNA small subunit methyltransferase H (316 aa).

Residues 35-37 (AGH), Asp-55, Phe-84, Asp-105, and Gln-112 each bind S-adenosyl-L-methionine.

Belongs to the methyltransferase superfamily. RsmH family.

Its subcellular location is the cytoplasm. The enzyme catalyses cytidine(1402) in 16S rRNA + S-adenosyl-L-methionine = N(4)-methylcytidine(1402) in 16S rRNA + S-adenosyl-L-homocysteine + H(+). In terms of biological role, specifically methylates the N4 position of cytidine in position 1402 (C1402) of 16S rRNA. The sequence is that of Ribosomal RNA small subunit methyltransferase H from Streptococcus mutans serotype c (strain ATCC 700610 / UA159).